A 155-amino-acid polypeptide reads, in one-letter code: 6,7-dimethyl-8-ribityllumazine synthase (155 aa).

5-amino-6-(D-ribitylamino)uracil-binding positions include Phe23, 57–59 (AFE), and 83–85 (AVI). A (2S)-2-hydroxy-3-oxobutyl phosphate-binding site is contributed by 88–89 (AT). The active-site Proton donor is His91. Phe114 is a 5-amino-6-(D-ribitylamino)uracil binding site. A (2S)-2-hydroxy-3-oxobutyl phosphate-binding site is contributed by Arg128.

The protein belongs to the DMRL synthase family.

It carries out the reaction (2S)-2-hydroxy-3-oxobutyl phosphate + 5-amino-6-(D-ribitylamino)uracil = 6,7-dimethyl-8-(1-D-ribityl)lumazine + phosphate + 2 H2O + H(+). Its pathway is cofactor biosynthesis; riboflavin biosynthesis; riboflavin from 2-hydroxy-3-oxobutyl phosphate and 5-amino-6-(D-ribitylamino)uracil: step 1/2. Its function is as follows. Catalyzes the formation of 6,7-dimethyl-8-ribityllumazine by condensation of 5-amino-6-(D-ribitylamino)uracil with 3,4-dihydroxy-2-butanone 4-phosphate. This is the penultimate step in the biosynthesis of riboflavin. The chain is 6,7-dimethyl-8-ribityllumazine synthase from Leptospira biflexa serovar Patoc (strain Patoc 1 / Ames).